Consider the following 258-residue polypeptide: Probable parvulin-type peptidyl-prolyl cis-trans isomerase (258 aa).

An N-terminal signal peptide occupies residues 1–19; that stretch reads MKRIAMLAAACVIAVPAFA. The PpiC domain occupies 127–219; that stretch reads KMEYKVRHIL…FGWHVIQVDD (93 aa). A compositionally biased stretch (basic and acidic residues) spans 158-175; that stretch reads DDLAKKNSKDPGSAERGG. Positions 158-178 are disordered; sequence DDLAKKNSKDPGSAERGGDLG.

This sequence belongs to the PpiC/parvulin rotamase family.

It carries out the reaction [protein]-peptidylproline (omega=180) = [protein]-peptidylproline (omega=0). In Bordetella bronchiseptica (strain ATCC BAA-588 / NCTC 13252 / RB50) (Alcaligenes bronchisepticus), this protein is Probable parvulin-type peptidyl-prolyl cis-trans isomerase.